The primary structure comprises 911 residues: Translation initiation factor IF-2 (911 aa).

Composition is skewed to basic and acidic residues over residues 80–94 (LEEQ…EQQL) and 101–113 (RPER…RTEV). Disordered stretches follow at residues 80-142 (LEEQ…VSEP), 153-172 (VKSP…DVEG), and 195-309 (SSLG…KMRK). Over residues 214-256 (KEQADELKDEFDIKAKEGGKEREAGGESRKPVKKGSEETKKTT) the composition is skewed to basic and acidic residues. Positions 262 to 272 (AKKKKGKKKKK) are enriched in basic residues. A compositionally biased stretch (basic and acidic residues) spans 273-284 (PEVDEKTIEKNI). The span at 286 to 300 (STISGMDDTSGSGSS) shows a compositional bias: low complexity. A tr-type G domain is found at 408 to 578 (IRPPVVTIMG…LTEAEIRELK (171 aa)). The G1 stretch occupies residues 417–424 (GHVDHGKT). A GTP-binding site is contributed by 417 to 424 (GHVDHGKT). A G2 region spans residues 442-446 (GITQH). The G3 stretch occupies residues 464–467 (DTPG). GTP-binding positions include 464 to 468 (DTPGH) and 518 to 521 (NKID). Residues 518–521 (NKID) are G4. A G5 region spans residues 554-556 (SAK).

Belongs to the TRAFAC class translation factor GTPase superfamily. Classic translation factor GTPase family. IF-2 subfamily.

It localises to the cytoplasm. One of the essential components for the initiation of protein synthesis. Protects formylmethionyl-tRNA from spontaneous hydrolysis and promotes its binding to the 30S ribosomal subunits. Also involved in the hydrolysis of GTP during the formation of the 70S ribosomal complex. The chain is Translation initiation factor IF-2 from Chlorobium phaeobacteroides (strain BS1).